A 676-amino-acid chain; its full sequence is DNA ligase (676 aa).

NAD(+) contacts are provided by residues 39-43 (DYVYD), 88-91 (SLND), and E118. The active-site N6-AMP-lysine intermediate is the K120. NAD(+) is bound by residues R141, E175, K291, and K315. Zn(2+) is bound by residues C409, C412, C427, and C432. A BRCT domain is found at 595–676 (EVESPFKDKT…MVDALDASHF (82 aa)).

The protein belongs to the NAD-dependent DNA ligase family. LigA subfamily. Mg(2+) serves as cofactor. The cofactor is Mn(2+).

The enzyme catalyses NAD(+) + (deoxyribonucleotide)n-3'-hydroxyl + 5'-phospho-(deoxyribonucleotide)m = (deoxyribonucleotide)n+m + AMP + beta-nicotinamide D-nucleotide.. Its function is as follows. DNA ligase that catalyzes the formation of phosphodiester linkages between 5'-phosphoryl and 3'-hydroxyl groups in double-stranded DNA using NAD as a coenzyme and as the energy source for the reaction. It is essential for DNA replication and repair of damaged DNA. The protein is DNA ligase of Enterococcus faecalis (strain ATCC 700802 / V583).